The sequence spans 610 residues: DNA mismatch repair protein MutL (610 aa).

Belongs to the DNA mismatch repair MutL/HexB family.

In terms of biological role, this protein is involved in the repair of mismatches in DNA. It is required for dam-dependent methyl-directed DNA mismatch repair. May act as a 'molecular matchmaker', a protein that promotes the formation of a stable complex between two or more DNA-binding proteins in an ATP-dependent manner without itself being part of a final effector complex. This Rickettsia canadensis (strain McKiel) protein is DNA mismatch repair protein MutL.